The primary structure comprises 552 residues: MTDSRANRADATRGVASVSRRRFLAGAGLTAGAIALSSMSTSASAAPSRTLADGDRVPALVIGSGYGGAVAALRLTQAGIPTQIVEMGRSWDTPGSDGKIFCGMLNPDKRSMWLADKTDQPVSNFMGFGINKSIDRYVGVLDSERFSGIKVYQGRGVGGGSLVNGGMAVTPKRNYFEEILPSVDSNEMYNKYFPRANTGLGVNNIDQAWFESTEWYKFARTGRKTAQRSGFTTAFVPNVYDFEYMKKEAAGQVTKSGLGGEVIYGNNAGKKSLDKTYLAQAAATGKLTITTLHRVTKVAPATGSGYSVTMEQIDEQGNVVATKVVTADRVFFAAGSVGTSKLLVSMKAQGHLPNLSSQVGEGWGNNGNIMVGRANHMWDATGSKQATIPTMGIDNWADPTAPIFAEIAPLPAGLETYVSLYLAITKNPERARFQFNSGTGKVDLTWAQSQNQKGIDMAKKVFDKINQKEGTIYRTDLFGVYFKTWGDDFTYHPLGGVLLNKATDNFGRLPEYPGLYVVDGSLVPGNVGVNPFVTITRLAERNMDKIISSDIQ.

Positions 1-45 form a signal peptide, tat-type signal; the sequence is MTDSRANRADATRGVASVSRRRFLAGAGLTAGAIALSSMSTSASA. FAD contacts are provided by Tyr66, Gly67, Glu86, Gly160, Asn164, Gly165, Met167, and Val295. Residues Glu406 and His492 each act as proton acceptor in the active site. 2 residues coordinate FAD: Gly520 and Phe532.

This sequence belongs to the GMC oxidoreductase family. FAD serves as cofactor. Predicted to be exported by the Tat system. The position of the signal peptide cleavage has been experimentally proven.

Its subcellular location is the secreted. The enzyme catalyses cholesterol + O2 = cholest-5-en-3-one + H2O2. It carries out the reaction cholest-5-en-3-one = cholest-4-en-3-one. Its pathway is steroid metabolism; cholesterol degradation. In terms of biological role, bifunctional enzyme that catalyzes the oxidation and isomerization of cholesterol to cholestenone (cholest-4-en-3-one), an initial step in the cholesterol degradation process. This Brevibacterium sterolicum protein is Cholesterol oxidase.